A 348-amino-acid polypeptide reads, in one-letter code: Mannonate dehydratase (348 aa).

The protein belongs to the mannonate dehydratase family. Fe(2+) serves as cofactor. Requires Mn(2+) as cofactor.

The catalysed reaction is D-mannonate = 2-dehydro-3-deoxy-D-gluconate + H2O. The protein operates within carbohydrate metabolism; pentose and glucuronate interconversion. Functionally, catalyzes the dehydration of D-mannonate. This chain is Mannonate dehydratase, found in Streptococcus agalactiae serotype III (strain NEM316).